A 465-amino-acid polypeptide reads, in one-letter code: Amino-acid carrier protein AlsT (465 aa).

The next 10 membrane-spanning stretches (helical) occupy residues 20–40 (LFYI…FIQF), 82–102 (VALA…VVAA), 142–162 (WLGI…FNAV), 177–197 (VNKI…IFGG), 208–228 (IVPV…ITNI), 241–261 (NALG…VIGA), 296–316 (LGVF…ILLY), 336–356 (IGGW…FSSV), 382–402 (IAVI…VWDM), and 405–425 (LFMG…SNVA).

This sequence belongs to the alanine or glycine:cation symporter (AGCS) (TC 2.A.25) family.

It is found in the cell membrane. The chain is Amino-acid carrier protein AlsT (alsT) from Bacillus subtilis (strain 168).